The chain runs to 425 residues: MVKVYIENYGCARNRADGEIMAALLYLSGHEIVESPEESEIVVVNSCAVKDPTERKIARRIRELLDNGKKVIVTGCLPHVNPDVIDERVSAILGVKSIDRIVQAVEYAMRGEKLISVPDWKKRNLDKLDFPRLSPRNVYFILPIAEGCLNACTYCATRLARGVLKSYSPEKIIGWVKWAIKQGYKEIWLSAEDTGCYGFDIGTNLAKLIDEITAIEGEFRIRVGMMNPNHVLKFLDELIDAYKDEKVYKFLHLPVQSGDNEILRKMGRMYTVEEFEEIVKAFRREFPELNLHTDIIVGFPGESEEAFQRSVELIKRIRPDKVNVSRYSPRPGTIAAKWKQLPGWVVKERSRLLHRIRLQISYEINRKYIGKKVKVLIHGEGKKGNVDAVTMNYKHIILPEGRKGEFREARVKNAASTYLLGEIIT.

One can recognise an MTTase N-terminal domain in the interval valine 2–arginine 110. 6 residues coordinate [4Fe-4S] cluster: cysteine 11, cysteine 47, cysteine 76, cysteine 148, cysteine 152, and cysteine 155. The Radical SAM core domain maps to serine 134–glutamate 363. A TRAM domain is found at arginine 366 to threonine 425.

This sequence belongs to the methylthiotransferase family. CDKAL1 subfamily. Requires [4Fe-4S] cluster as cofactor.

The catalysed reaction is N(6)-L-threonylcarbamoyladenosine(37) in tRNA + (sulfur carrier)-SH + AH2 + 2 S-adenosyl-L-methionine = 2-methylsulfanyl-N(6)-L-threonylcarbamoyladenosine(37) in tRNA + (sulfur carrier)-H + 5'-deoxyadenosine + L-methionine + A + S-adenosyl-L-homocysteine + 2 H(+). Functionally, catalyzes the methylthiolation of N6-threonylcarbamoyladenosine (t(6)A), leading to the formation of 2-methylthio-N6-threonylcarbamoyladenosine (ms(2)t(6)A) at position 37 in tRNAs that read codons beginning with adenine. In Pyrococcus horikoshii (strain ATCC 700860 / DSM 12428 / JCM 9974 / NBRC 100139 / OT-3), this protein is Probable threonylcarbamoyladenosine tRNA methylthiotransferase.